The following is a 172-amino-acid chain: Ribosome maturation factor RimM (172 aa).

The PRC barrel domain occupies 93 to 167 (DEHEFYYHEI…RVVITPIPGM (75 aa)).

This sequence belongs to the RimM family. As to quaternary structure, binds ribosomal protein uS19.

It localises to the cytoplasm. An accessory protein needed during the final step in the assembly of 30S ribosomal subunit, possibly for assembly of the head region. Essential for efficient processing of 16S rRNA. May be needed both before and after RbfA during the maturation of 16S rRNA. It has affinity for free ribosomal 30S subunits but not for 70S ribosomes. The polypeptide is Ribosome maturation factor RimM (Exiguobacterium sp. (strain ATCC BAA-1283 / AT1b)).